The sequence spans 216 residues: Elongation factor Ts (216 aa).

Residues 80–83 (TDFV) form an involved in Mg(2+) ion dislocation from EF-Tu region.

The protein belongs to the EF-Ts family.

Its subcellular location is the cytoplasm. Associates with the EF-Tu.GDP complex and induces the exchange of GDP to GTP. It remains bound to the aminoacyl-tRNA.EF-Tu.GTP complex up to the GTP hydrolysis stage on the ribosome. This is Elongation factor Ts from Alkaliphilus oremlandii (strain OhILAs) (Clostridium oremlandii (strain OhILAs)).